The chain runs to 634 residues: Chaperone protein HtpG (634 aa).

An a; substrate-binding region spans residues 1 to 342 (MTVETDKQTL…SSDLSLNVSR (342 aa)). Residues 343 to 559 (EILQSGPVVD…QGDLGLQMRQ (217 aa)) are b. The tract at residues 560-634 (LLEASGQAVP…LNKLLLELSA (75 aa)) is c.

Belongs to the heat shock protein 90 family. In terms of assembly, homodimer.

Its subcellular location is the cytoplasm. In terms of biological role, molecular chaperone. Has ATPase activity. In Xanthomonas axonopodis pv. citri (strain 306), this protein is Chaperone protein HtpG.